Consider the following 754-residue polypeptide: MIETIQADWIKSEAINLENCCNDNPLKILGPHFYEEQWVIRVWVPEADEVKVNFKDKTYKAESINHKWLFEAILPENPNSNYEINISRGGITHTQHDPWSYREEWMGEVDRHLFAEGNHHHIWEKMGAHLIEDKNQKGVMFCIWAPNAKSISIIGDINSWDGRHNPMQKRLGGIWELFMPMMKEGDKYKYEIRTQQGHIYEKADPYGFLHEVRPQNGSIVSKLKNFNWSDSSWISNRDSSSQINKPISVYEMHLGSWLHESTDNKYLDDNGEPRDPVPAADLKPGTRLLTYPELTKKLIPYVKERGFTHIELMPISEHPFDGSWGYQVTGWYAPTSRFGTPNEFREFVNKCHEEGIGVILDWVPGHFPKDKHGLAFFDGCHLYEHGDSRIGEHKEWGTLIFNYSRNEVRNFLVANLVYWFEEFHIDGIRVDAVASMLYRDYLRPDGEWIPNENGGNENIEAVKFLQQANHVLFQHFPGALSIAEESTTWPMVTKPTDMGGLGFNLKWNMGWMHDMLDYFEIDPWFRQFHQNSVTFSITYNYTENFMLALSHDEVVHGKSHLLHKMPGDDWKKYANTRALLTYMWTHPGKKTIFMGMEFGQRQEWNVWDDLQWELLEFEPHRGIRNLIDDLNKLYKNEPALWKNDFDPYGFQWIDCNDKSNSVISFMRRESDTNEWLVIVANFTPNTHGSYKIGVPVEGFYKEIFNSDGSRYGGSNKGNMGGKDTINYNIHDYQNALELALPPLSVSIFKHQSEK.

Asp431 functions as the Nucleophile in the catalytic mechanism. Glu484 acts as the Proton donor in catalysis.

The protein belongs to the glycosyl hydrolase 13 family. GlgB subfamily. As to quaternary structure, monomer.

It carries out the reaction Transfers a segment of a (1-&gt;4)-alpha-D-glucan chain to a primary hydroxy group in a similar glucan chain.. It functions in the pathway glycan biosynthesis; glycogen biosynthesis. Its function is as follows. Catalyzes the formation of the alpha-1,6-glucosidic linkages in glycogen by scission of a 1,4-alpha-linked oligosaccharide from growing alpha-1,4-glucan chains and the subsequent attachment of the oligosaccharide to the alpha-1,6 position. The chain is 1,4-alpha-glucan branching enzyme GlgB from Prochlorococcus marinus (strain MIT 9301).